A 142-amino-acid polypeptide reads, in one-letter code: Semaphorin-like protein VACWR164 (142 aa).

One can recognise a Sema domain in the interval 1 to 142; the sequence is MNTIKQSFST…MPQMKKILKM (142 aa).

This sequence belongs to the semaphorin family.

The sequence is that of Semaphorin-like protein VACWR164 from Bos taurus (Bovine).